Reading from the N-terminus, the 515-residue chain is Bifunctional purine biosynthesis protein PurH (515 aa).

An MGS-like domain is found at Met-1–Val-145.

This sequence belongs to the PurH family.

The catalysed reaction is (6R)-10-formyltetrahydrofolate + 5-amino-1-(5-phospho-beta-D-ribosyl)imidazole-4-carboxamide = 5-formamido-1-(5-phospho-D-ribosyl)imidazole-4-carboxamide + (6S)-5,6,7,8-tetrahydrofolate. It catalyses the reaction IMP + H2O = 5-formamido-1-(5-phospho-D-ribosyl)imidazole-4-carboxamide. It functions in the pathway purine metabolism; IMP biosynthesis via de novo pathway; 5-formamido-1-(5-phospho-D-ribosyl)imidazole-4-carboxamide from 5-amino-1-(5-phospho-D-ribosyl)imidazole-4-carboxamide (10-formyl THF route): step 1/1. Its pathway is purine metabolism; IMP biosynthesis via de novo pathway; IMP from 5-formamido-1-(5-phospho-D-ribosyl)imidazole-4-carboxamide: step 1/1. In Streptococcus pneumoniae serotype 2 (strain D39 / NCTC 7466), this protein is Bifunctional purine biosynthesis protein PurH.